The primary structure comprises 148 residues: Large ribosomal subunit protein uL16 (148 aa).

It belongs to the universal ribosomal protein uL16 family. Part of the 50S ribosomal subunit.

Functionally, binds 23S rRNA and is also seen to make contacts with the A and possibly P site tRNAs. In Gloeobacter violaceus (strain ATCC 29082 / PCC 7421), this protein is Large ribosomal subunit protein uL16.